Reading from the N-terminus, the 417-residue chain is Probable dihydrofolate synthetase (417 aa).

34-37 (GKGS) provides a ligand contact to ATP. Mg(2+)-binding residues include S58, E123, and H151. R274 and D289 together coordinate ATP.

Belongs to the folylpolyglutamate synthase family.

It catalyses the reaction 7,8-dihydropteroate + L-glutamate + ATP = 7,8-dihydrofolate + ADP + phosphate + H(+). It functions in the pathway cofactor biosynthesis; tetrahydrofolylpolyglutamate biosynthesis. In terms of biological role, glutamate-adding enzyme which catalyzes the binding of the first glutamyl side chain to dihydropteroate. Leads to the de nove synthesis of tetrahydrofolate. de novo. This chain is Probable dihydrofolate synthetase (fol3), found in Schizosaccharomyces pombe (strain 972 / ATCC 24843) (Fission yeast).